Here is a 294-residue protein sequence, read N- to C-terminus: UPF0282 protein APE_0500.1 (294 aa).

It belongs to the UPF0282 family.

This Aeropyrum pernix (strain ATCC 700893 / DSM 11879 / JCM 9820 / NBRC 100138 / K1) protein is UPF0282 protein APE_0500.1.